The sequence spans 475 residues: UDP-N-acetylmuramate--L-alanine ligase (475 aa).

Residue glycine 118–threonine 124 coordinates ATP.

It belongs to the MurCDEF family.

The protein localises to the cytoplasm. The catalysed reaction is UDP-N-acetyl-alpha-D-muramate + L-alanine + ATP = UDP-N-acetyl-alpha-D-muramoyl-L-alanine + ADP + phosphate + H(+). It participates in cell wall biogenesis; peptidoglycan biosynthesis. In terms of biological role, cell wall formation. The sequence is that of UDP-N-acetylmuramate--L-alanine ligase from Paracoccus denitrificans (strain Pd 1222).